The following is a 176-amino-acid chain: Protein FAM89A (176 aa).

Positions 140-165 (DFQEQGSLRDGQGRGSPGDPSLPLTH) are disordered.

Belongs to the FAM89 family.

This Rattus norvegicus (Rat) protein is Protein FAM89A (Fam89a).